A 78-amino-acid polypeptide reads, in one-letter code: Large ribosomal subunit protein bL28 (78 aa).

Positions 1–23 are disordered; the sequence is MSRVCQVTGKKPMVGNNRSHAKN.

This sequence belongs to the bacterial ribosomal protein bL28 family.

The chain is Large ribosomal subunit protein bL28 from Shewanella frigidimarina (strain NCIMB 400).